A 580-amino-acid polypeptide reads, in one-letter code: E3 ubiquitin-protein ligase TRIM45 (580 aa).

The RING-type zinc-finger motif lies at cysteine 29–aspartate 98. 2 consecutive B box-type zinc fingers follow at residues glycine 130 to leucine 176 and glycine 186 to threonine 227. 8 residues coordinate Zn(2+): cysteine 135, cysteine 138, cysteine 158, histidine 162, cysteine 191, histidine 194, cysteine 214, and histidine 219. Residues valine 249–glutamate 329 are a coiled coil. The stretch at threonine 394–valine 497 is one Filamin repeat.

Belongs to the TRIM/RBCC family.

It localises to the cytoplasm. Its subcellular location is the nucleus. It catalyses the reaction S-ubiquitinyl-[E2 ubiquitin-conjugating enzyme]-L-cysteine + [acceptor protein]-L-lysine = [E2 ubiquitin-conjugating enzyme]-L-cysteine + N(6)-ubiquitinyl-[acceptor protein]-L-lysine.. E3 ubiquitin-protein ligase that plays a role in the regulation of inflammatory response. Mechanistically, mediates the 'Lys-48'-linked polyubiquitination of TAB2, a regulatory protein of the kinase TAK1, leading to its degradation via the proteasomal pathway and inhibition of the TLR-mediated inflammatory immune response. May act as a transcriptional repressor in mitogen-activated protein kinase signaling pathway. This chain is E3 ubiquitin-protein ligase TRIM45 (Trim45), found in Mus musculus (Mouse).